Reading from the N-terminus, the 267-residue chain is Phosphatidylglycerol--prolipoprotein diacylglyceryl transferase (267 aa).

The next 4 helical transmembrane spans lie at 20–40 (LEIRWYAICILLGLILGVYLA), 57–77 (FILIAFPLSILGARIYYVAFS), 88–108 (IFAIWNGGIAIYGGLITGAIV), and 117–137 (FINTLDFLDIVAPSVMIAQAI). Arg-139 is a binding site for a 1,2-diacyl-sn-glycero-3-phospho-(1'-sn-glycerol). Transmembrane regions (helical) follow at residues 175 to 195 (QPTFLFESLWNLLGFGLVCVL), 205 to 225 (GEITAFYLVWYGCGRLLIEGL), and 235 to 255 (IRVSQWLSGVLILVGIIMVVL).

Belongs to the Lgt family.

It localises to the cell membrane. It catalyses the reaction L-cysteinyl-[prolipoprotein] + a 1,2-diacyl-sn-glycero-3-phospho-(1'-sn-glycerol) = an S-1,2-diacyl-sn-glyceryl-L-cysteinyl-[prolipoprotein] + sn-glycerol 1-phosphate + H(+). It participates in protein modification; lipoprotein biosynthesis (diacylglyceryl transfer). Its function is as follows. Catalyzes the transfer of the diacylglyceryl group from phosphatidylglycerol to the sulfhydryl group of the N-terminal cysteine of a prolipoprotein, the first step in the formation of mature lipoproteins. The protein is Phosphatidylglycerol--prolipoprotein diacylglyceryl transferase of Streptococcus suis (strain 98HAH33).